We begin with the raw amino-acid sequence, 228 residues long: uncharacterized protein (228 aa).

In terms of domain architecture, Response regulatory spans 5–119 (HILIVEDEEK…ELLARIRAAL (115 aa)). Asp54 carries the post-translational modification 4-aspartylphosphate. The ompR/PhoB-type DNA-binding region spans 130–228 (GTFLTYDDLR…IRGVGYAIKG (99 aa)).

Post-translationally, phosphorylated by YkoH.

The protein localises to the cytoplasm. Its function is as follows. Probable member of the two-component regulatory system YkoH/YkoG. This is an uncharacterized protein from Bacillus subtilis (strain 168).